Consider the following 325-residue polypeptide: Elongation factor P--(R)-beta-lysine ligase (325 aa).

Residue 76–78 (SPE) participates in substrate binding. ATP is bound by residues 100–102 (RNE) and Asn-109. Tyr-118 contributes to the substrate binding site. 244 to 245 (EL) is a binding site for ATP. Residue Glu-251 coordinates substrate. Residue Gly-300 coordinates ATP.

Belongs to the class-II aminoacyl-tRNA synthetase family. EpmA subfamily. As to quaternary structure, homodimer.

It carries out the reaction D-beta-lysine + L-lysyl-[protein] + ATP = N(6)-((3R)-3,6-diaminohexanoyl)-L-lysyl-[protein] + AMP + diphosphate + H(+). Functionally, with EpmB is involved in the beta-lysylation step of the post-translational modification of translation elongation factor P (EF-P) on 'Lys-34'. Catalyzes the ATP-dependent activation of (R)-beta-lysine produced by EpmB, forming a lysyl-adenylate, from which the beta-lysyl moiety is then transferred to the epsilon-amino group of EF-P 'Lys-34'. The chain is Elongation factor P--(R)-beta-lysine ligase from Escherichia fergusonii (strain ATCC 35469 / DSM 13698 / CCUG 18766 / IAM 14443 / JCM 21226 / LMG 7866 / NBRC 102419 / NCTC 12128 / CDC 0568-73).